The sequence spans 276 residues: Hydroxyethylthiazole kinase (276 aa).

The ATP site is built by Arg-126 and Ser-172. Substrate is bound at residue Gly-199.

This sequence belongs to the Thz kinase family. It depends on Mg(2+) as a cofactor.

The enzyme catalyses 5-(2-hydroxyethyl)-4-methylthiazole + ATP = 4-methyl-5-(2-phosphooxyethyl)-thiazole + ADP + H(+). It participates in cofactor biosynthesis; thiamine diphosphate biosynthesis; 4-methyl-5-(2-phosphoethyl)-thiazole from 5-(2-hydroxyethyl)-4-methylthiazole: step 1/1. Functionally, catalyzes the phosphorylation of the hydroxyl group of 4-methyl-5-beta-hydroxyethylthiazole (THZ). This Burkholderia pseudomallei (strain 1710b) protein is Hydroxyethylthiazole kinase.